A 366-amino-acid chain; its full sequence is Spermidine/putrescine import ATP-binding protein PotA (366 aa).

An ABC transporter domain is found at isoleucine 8–isoleucine 239. ATP is bound at residue glycine 41 to threonine 48.

It belongs to the ABC transporter superfamily. Spermidine/putrescine importer (TC 3.A.1.11.1) family. The complex is composed of two ATP-binding proteins (PotA), two transmembrane proteins (PotB and PotC) and a solute-binding protein (PotD).

It is found in the cell membrane. It carries out the reaction ATP + H2O + polyamine-[polyamine-binding protein]Side 1 = ADP + phosphate + polyamineSide 2 + [polyamine-binding protein]Side 1.. Part of the ABC transporter complex PotABCD involved in spermidine/putrescine import. Responsible for energy coupling to the transport system. This chain is Spermidine/putrescine import ATP-binding protein PotA, found in Listeria monocytogenes serovar 1/2a (strain ATCC BAA-679 / EGD-e).